Consider the following 83-residue polypeptide: Beta-toxin Ct7 (83 aa).

The signal sequence occupies residues 1-18 (MKVLILIIASVLLIGVEC). The 63-residue stretch at 19 to 81 (KDGYPMNSEG…VWDSATNKCG (63 aa)) folds into the LCN-type CS-alpha/beta domain. Disulfide bonds link C29-C80, C33-C54, C40-C61, and C44-C63. Position 81 is a glycine amide (G81). Residue G82 is a propeptide.

It belongs to the long (4 C-C) scorpion toxin superfamily. Sodium channel inhibitor family. Beta subfamily. As to expression, expressed by the venom gland.

It is found in the secreted. Beta toxins bind voltage-independently at site-4 of sodium channels (Nav) and shift the voltage of activation toward more negative potentials thereby affecting sodium channel activation and promoting spontaneous and repetitive firing. Is possibly toxic to mice, freshwater shrimp and crickets. This is Beta-toxin Ct7 from Centruroides tecomanus (Scorpion).